The primary structure comprises 298 residues: Zinc import ATP-binding protein ZnuC (298 aa).

The ABC transporter domain occupies 17–232 (IELRNAGVYR…PEYVRLFGSR (216 aa)). 49–56 (GPNGAGKS) serves as a coordination point for ATP. The segment at 273–298 (RGHCHVEDGHHHDHEHHHHEGGQPRA) is disordered. Residues 276-298 (CHVEDGHHHDHEHHHHEGGQPRA) show a composition bias toward basic and acidic residues.

The protein belongs to the ABC transporter superfamily. Zinc importer (TC 3.A.1.15.5) family. In terms of assembly, the complex is composed of two ATP-binding proteins (ZnuC), two transmembrane proteins (ZnuB) and a solute-binding protein (ZnuA).

It is found in the cell inner membrane. The catalysed reaction is Zn(2+)(out) + ATP(in) + H2O(in) = Zn(2+)(in) + ADP(in) + phosphate(in) + H(+)(in). In terms of biological role, part of the ABC transporter complex ZnuABC involved in zinc import. Responsible for energy coupling to the transport system. This is Zinc import ATP-binding protein ZnuC from Brucella abortus (strain 2308).